Reading from the N-terminus, the 166-residue chain is CDP-archaeol synthase (166 aa).

The next 5 helical transmembrane spans lie at 7 to 27 (LLLS…GPFI), 55 to 75 (LIVA…FFTA), 78 to 98 (TLIS…GAFI), 116 to 136 (LDFV…ITWY), and 138 to 158 (FLFI…VAYL).

Belongs to the CDP-archaeol synthase family. Mg(2+) serves as cofactor.

It localises to the cell membrane. The enzyme catalyses 2,3-bis-O-(geranylgeranyl)-sn-glycerol 1-phosphate + CTP + H(+) = CDP-2,3-bis-O-(geranylgeranyl)-sn-glycerol + diphosphate. The protein operates within membrane lipid metabolism; glycerophospholipid metabolism. Functionally, catalyzes the formation of CDP-2,3-bis-(O-geranylgeranyl)-sn-glycerol (CDP-archaeol) from 2,3-bis-(O-geranylgeranyl)-sn-glycerol 1-phosphate (DGGGP) and CTP. This reaction is the third ether-bond-formation step in the biosynthesis of archaeal membrane lipids. This chain is CDP-archaeol synthase, found in Saccharolobus islandicus (strain Y.N.15.51 / Yellowstone #2) (Sulfolobus islandicus).